We begin with the raw amino-acid sequence, 59 residues long: Potassium channel toxin alpha-KTx 16.7 (59 aa).

A signal peptide spans 1–22 (MKILSILLIALVICSISICTEA). Intrachain disulfides connect Cys30/Cys51, Cys36/Cys56, and Cys40/Cys58.

Belongs to the short scorpion toxin superfamily. Potassium channel inhibitor family. Alpha-KTx 16 subfamily. As to expression, expressed by the venom gland.

The protein localises to the secreted. In terms of biological role, may play a role in blocking voltage-gated potassium channels Kv1.2/KCNA2, and Kv1.3/KCNA3. Blocks the voltage-gated potassium channel Kv1.3/KCNA3, with an IC(50) of 118.3 +-55.8 nM. The chain is Potassium channel toxin alpha-KTx 16.7 from Mesobuthus gibbosus (Mediterranean checkered scorpion).